A 165-amino-acid chain; its full sequence is Cyclic pyranopterin monophosphate synthase (165 aa).

Substrate-binding positions include 76 to 78 and 114 to 115; these read LCH and ME. Asp129 is a catalytic residue.

It belongs to the MoaC family. In terms of assembly, homohexamer; trimer of dimers.

The catalysed reaction is (8S)-3',8-cyclo-7,8-dihydroguanosine 5'-triphosphate = cyclic pyranopterin phosphate + diphosphate. It participates in cofactor biosynthesis; molybdopterin biosynthesis. Its function is as follows. Catalyzes the conversion of (8S)-3',8-cyclo-7,8-dihydroguanosine 5'-triphosphate to cyclic pyranopterin monophosphate (cPMP). In Brucella melitensis biotype 2 (strain ATCC 23457), this protein is Cyclic pyranopterin monophosphate synthase.